The sequence spans 177 residues: Coatomer subunit zeta-1 (177 aa).

The protein belongs to the adaptor complexes small subunit family. As to quaternary structure, oligomeric complex that consists of at least the alpha, beta, beta', gamma, delta, epsilon and zeta subunits.

Its subcellular location is the cytoplasm. It localises to the golgi apparatus membrane. The protein localises to the cytoplasmic vesicle. It is found in the COPI-coated vesicle membrane. Functionally, the coatomer is a cytosolic protein complex that binds to dilysine motifs and reversibly associates with Golgi non-clathrin-coated vesicles, which further mediate biosynthetic protein transport from the ER, via the Golgi up to the trans Golgi network. Coatomer complex is required for budding from Golgi membranes, and is essential for the retrograde Golgi-to-ER transport of dilysine-tagged proteins. The zeta subunit may be involved in regulating the coat assembly and, hence, the rate of biosynthetic protein transport due to its association-dissociation properties with the coatomer complex. The sequence is that of Coatomer subunit zeta-1 from Arabidopsis thaliana (Mouse-ear cress).